A 228-amino-acid polypeptide reads, in one-letter code: Probable calcium-binding protein CML48 (228 aa).

EF-hand domains lie at 52 to 87 (ETHP…SGYD) and 121 to 156 (NCLA…LGCV). 4 residues coordinate Ca(2+): Asp-65, Asn-67, Ser-69, and Glu-76.

In terms of biological role, potential calcium sensor. This Arabidopsis thaliana (Mouse-ear cress) protein is Probable calcium-binding protein CML48 (CML48).